The primary structure comprises 200 residues: 7-methyl-GTP pyrophosphatase (200 aa).

The active-site Proton acceptor is D75.

Belongs to the Maf family. YceF subfamily. A divalent metal cation serves as cofactor.

The protein localises to the cytoplasm. It carries out the reaction N(7)-methyl-GTP + H2O = N(7)-methyl-GMP + diphosphate + H(+). Nucleoside triphosphate pyrophosphatase that hydrolyzes 7-methyl-GTP (m(7)GTP). May have a dual role in cell division arrest and in preventing the incorporation of modified nucleotides into cellular nucleic acids. The polypeptide is 7-methyl-GTP pyrophosphatase (Hydrogenovibrio crunogenus (strain DSM 25203 / XCL-2) (Thiomicrospira crunogena)).